Here is a 158-residue protein sequence, read N- to C-terminus: Transcription elongation factor GreA (158 aa).

Residues 47 to 68 are a coiled coil; it reads AEYDAAKEAQGLLEMRIAKLEE.

This sequence belongs to the GreA/GreB family.

Its function is as follows. Necessary for efficient RNA polymerase transcription elongation past template-encoded arresting sites. The arresting sites in DNA have the property of trapping a certain fraction of elongating RNA polymerases that pass through, resulting in locked ternary complexes. Cleavage of the nascent transcript by cleavage factors such as GreA or GreB allows the resumption of elongation from the new 3'terminus. GreA releases sequences of 2 to 3 nucleotides. The sequence is that of Transcription elongation factor GreA from Flavobacterium johnsoniae (strain ATCC 17061 / DSM 2064 / JCM 8514 / BCRC 14874 / CCUG 350202 / NBRC 14942 / NCIMB 11054 / UW101) (Cytophaga johnsonae).